The primary structure comprises 112 residues: Na(+)/H(+) antiporter subunit C (112 aa).

3 consecutive transmembrane segments (helical) span residues 4 to 21, 28 to 50, and 70 to 92; these read LMSI…YLIL, VVVG…AGLQ, and QALI…VLAY.

The protein belongs to the CPA3 antiporters (TC 2.A.63) subunit C family. In terms of assembly, forms a heterooligomeric complex that consists of seven subunits: MrpA, MrpB, MrpC, MrpD, MrpE, MrpF and MrpG.

It is found in the cell membrane. Mnh complex is a Na(+)Li(+)/H(+) antiporter involved in Na(+) and/or Li(+) excretion and Na(+) resistance. Na(+)/H(+) antiport consumes a transmembrane electrical potential, and is thus inferred to be electrogenic. Does not transport K(+), Ca(2+) or Mg(2+). This chain is Na(+)/H(+) antiporter subunit C (mrpC), found in Alkalihalophilus pseudofirmus (strain ATCC BAA-2126 / JCM 17055 / OF4) (Bacillus pseudofirmus).